We begin with the raw amino-acid sequence, 255 residues long: Phosphate import ATP-binding protein PstB (255 aa).

One can recognise an ABC transporter domain in the interval 9–250 (IAVQNLNFYY…PKIQRTEDYI (242 aa)). 41 to 48 (GPSGCGKS) provides a ligand contact to ATP.

This sequence belongs to the ABC transporter superfamily. Phosphate importer (TC 3.A.1.7) family. In terms of assembly, the complex is composed of two ATP-binding proteins (PstB), two transmembrane proteins (PstC and PstA) and a solute-binding protein (PstS).

It localises to the cell inner membrane. The enzyme catalyses phosphate(out) + ATP + H2O = ADP + 2 phosphate(in) + H(+). Its function is as follows. Part of the ABC transporter complex PstSACB involved in phosphate import. Responsible for energy coupling to the transport system. The protein is Phosphate import ATP-binding protein PstB of Haemophilus influenzae (strain 86-028NP).